Consider the following 149-residue polypeptide: Secreted RxLR effector protein 47 (149 aa).

A signal peptide spans 1-22 (MICLLPLIAVMLFVFATHTVLA). The short motif at 57–79 (RFLRQETTFEEKPSVNDVHAEER) is the RxLR-dEER element.

The protein belongs to the RxLR effector family.

Its subcellular location is the secreted. The protein localises to the host membrane. Functionally, secreted effector that completely suppresses the host cell death induced by cell death-inducing proteins. The sequence is that of Secreted RxLR effector protein 47 from Plasmopara viticola (Downy mildew of grapevine).